The chain runs to 528 residues: Benzoylformate decarboxylase (528 aa).

Q117 and L118 together coordinate Mg(2+). The segment at 377–460 is thiamine pyrophosphate binding; that stretch reads TSTVTAFWQR…IILKNGTYGA (84 aa). Positions 428, 455, and 457 each coordinate Ca(2+).

Belongs to the TPP enzyme family. As to quaternary structure, homotetramer. Ca(2+) serves as cofactor. It depends on thiamine diphosphate as a cofactor. Mg(2+) is required as a cofactor.

The catalysed reaction is phenylglyoxylate + H(+) = benzaldehyde + CO2. It functions in the pathway aromatic compound metabolism; (R)-mandelate degradation; benzoate from (R)-mandelate: step 3/4. This chain is Benzoylformate decarboxylase (mdlC), found in Pseudomonas aeruginosa (strain ATCC 15692 / DSM 22644 / CIP 104116 / JCM 14847 / LMG 12228 / 1C / PRS 101 / PAO1).